Here is a 415-residue protein sequence, read N- to C-terminus: NPL4-like protein (415 aa).

Residues 130–279 (AASFDRDSAN…FEAFQMSEIC (150 aa)) enclose the MPN domain.

It belongs to the NPL4 family.

It localises to the endoplasmic reticulum. The protein operates within protein degradation; proteasomal ubiquitin-dependent pathway. Functionally, may be part of a complex that binds ubiquitinated proteins and that is necessary for the export of misfolded proteins from the ER to the cytoplasm, where they are degraded by the proteasome. This chain is NPL4-like protein, found in Oryza sativa subsp. japonica (Rice).